A 408-amino-acid polypeptide reads, in one-letter code: uncharacterized protein (408 aa).

Residues 56-76 (YWAGPAAASMVAAVTPYVAWL) form a helical membrane-spanning segment.

The protein belongs to the mycobacterial PPE family.

The protein resides in the cell membrane. This is an uncharacterized protein from Mycobacterium bovis (strain ATCC BAA-935 / AF2122/97).